Consider the following 379-residue polypeptide: Cathepsin B-like cysteine proteinase 6 (379 aa).

An N-terminal signal peptide occupies residues 1-16 (MKTLLFLSCIVVAAYC). The propeptide occupies 17–104 (ACNDNLESVL…LSKTKDLDLD (88 aa)). 6 disulfides stabilise this stretch: Cys-118–Cys-147, Cys-130–Cys-174, Cys-166–Cys-233, Cys-167–Cys-170, Cys-203–Cys-237, and Cys-211–Cys-223. Cys-133 is a catalytic residue. Asn-196 is a glycosylation site (N-linked (GlcNAc...) asparagine). Residue Asn-201 is glycosylated (N-linked (GlcNAc...) asparagine; atypical). Active-site residues include His-305 and Asn-325.

The protein belongs to the peptidase C1 family.

The sequence is that of Cathepsin B-like cysteine proteinase 6 (cpr-6) from Caenorhabditis elegans.